Consider the following 151-residue polypeptide: Large ribosomal subunit protein eL8 (151 aa).

It belongs to the eukaryotic ribosomal protein eL8 family. Part of the 50S ribosomal subunit. Probably part of the RNase P complex.

It is found in the cytoplasm. Functionally, multifunctional RNA-binding protein that recognizes the K-turn motif in ribosomal RNA, the RNA component of RNase P, box H/ACA, box C/D and box C'/D' sRNAs. This chain is Large ribosomal subunit protein eL8, found in Pyrobaculum aerophilum (strain ATCC 51768 / DSM 7523 / JCM 9630 / CIP 104966 / NBRC 100827 / IM2).